Reading from the N-terminus, the 1631-residue chain is ALK tyrosine kinase receptor (1631 aa).

The first 18 residues, 1-18 (MGSVGLLGLLLLRLSVTA), serve as a signal peptide directing secretion. The Extracellular segment spans residues 19 to 1053 (SGSGAGTGSG…PHLPLSLVLS (1035 aa)). Positions 20–53 (GSGAGTGSGTGSGTGTGTGQLVGSPATGPALQPR) are disordered. Over residues 21–39 (SGAGTGSGTGSGTGTGTGQ) the composition is skewed to gly residues. Residues 60–82 (RLQRKSLAVDFVVPSLFRVYARD) form a heparin-binding region region. N-linked (GlcNAc...) asparagine glycans are attached at residues asparagine 185, asparagine 260, asparagine 301, asparagine 340, asparagine 427, asparagine 440, asparagine 461, asparagine 579, asparagine 587, and asparagine 643. In terms of domain architecture, MAM 1 spans 280-443 (LECSFDFPCE…DFFALKNCSE (164 aa)). Residues 494–652 (FYCNFENGFC…NISISLDCYL (159 aa)) enclose the MAM 2 domain. A disulfide bond links cysteine 703 and cysteine 716. N-linked (GlcNAc...) asparagine glycosylation occurs at asparagine 724. A disulfide bond links cysteine 798 and cysteine 809. N-linked (GlcNAc...) asparagine glycans are attached at residues asparagine 823, asparagine 878, asparagine 879, and asparagine 901. Cysteine 921 and cysteine 943 are joined by a disulfide. A glycan (N-linked (GlcNAc...) asparagine) is linked at asparagine 1001. Disulfide bonds link cysteine 1002–cysteine 1010, cysteine 1005–cysteine 1021, and cysteine 1023–cysteine 1036. The tract at residues 1002-1040 (CSHCEGDECHMDPESHKVICFCDHGTVLAEDGVSCIVSP) is EGF-like. Residues 1054–1074 (VVTSALVAALVLAFSGIMIVY) traverse the membrane as a helical segment. At 1075 to 1631 (RRKHQELQAM…DALLKTPPGP (557 aa)) the chain is on the cytoplasmic side. One can recognise a Protein kinase domain in the interval 1131-1407 (ITLIRGLGHG…IEYCTQDPDV (277 aa)). Residues 1137 to 1145 (LGHGAFGEV) and lysine 1165 each bind ATP. Aspartate 1264 functions as the Proton acceptor in the catalytic mechanism. Disordered regions lie at residues 1423 to 1493 (EEKV…GHVN), 1526 to 1554 (WFTE…REGS), and 1609 to 1631 (FEGT…PPGP).

As to quaternary structure, homodimer; homodimerizes following heparin- and ligand-binding. Interacts with CBL, IRS1, PIK3R1 and PLCG1. Interacts with FRS2 and SHC1. Interacts with PTN and MDK. Post-translationally, phosphorylated at tyrosine residues by autocatalysis, which activates kinase activity. In cells not stimulated by a ligand, receptor protein tyrosine phosphatase beta and zeta complex (PTPRB/PTPRZ1) dephosphorylates ALK at the sites in ALK that are undergoing autophosphorylation through autoactivation.

The protein resides in the cell membrane. The enzyme catalyses L-tyrosyl-[protein] + ATP = O-phospho-L-tyrosyl-[protein] + ADP + H(+). Its activity is regulated as follows. Activated upon ALKAL2 ligand-binding. ALKAL2-driven activation is coupled with heparin-binding. Following ligand-binding, homodimerizes and autophosphorylates, activating its kinase activity. Inactivated through dephosphorylation by receptor protein tyrosine phosphatase beta and zeta complex (PTPRB/PTPRZ1) when there is no stimulation by a ligand. In terms of biological role, neuronal receptor tyrosine kinase that is essentially and transiently expressed in specific regions of the central and peripheral nervous systems and plays an important role in the genesis and differentiation of the nervous system. Also acts as a key thinness protein involved in the resistance to weight gain: in hypothalamic neurons, controls energy expenditure acting as a negative regulator of white adipose tissue lipolysis and sympathetic tone to fine-tune energy homeostasis. Following activation by ALKAL2 ligand at the cell surface, transduces an extracellular signal into an intracellular response. In contrast, ALKAL1 is not a potent physiological ligand for ALK. Ligand-binding to the extracellular domain induces tyrosine kinase activation, leading to activation of the mitogen-activated protein kinase (MAPK) pathway. Phosphorylates almost exclusively at the first tyrosine of the Y-x-x-x-Y-Y motif. Induces tyrosine phosphorylation of CBL, FRS2, IRS1 and SHC1, as well as of the MAP kinases MAPK1/ERK2 and MAPK3/ERK1. ALK activation may also be regulated by pleiotrophin (PTN) and midkine (MDK). PTN-binding induces MAPK pathway activation, which is important for the anti-apoptotic signaling of PTN and regulation of cell proliferation. MDK-binding induces phosphorylation of the ALK target insulin receptor substrate (IRS1), activates mitogen-activated protein kinases (MAPKs) and PI3-kinase, resulting also in cell proliferation induction. Drives NF-kappa-B activation, probably through IRS1 and the activation of the AKT serine/threonine kinase. Recruitment of IRS1 to activated ALK and the activation of NF-kappa-B are essential for the autocrine growth and survival signaling of MDK. This chain is ALK tyrosine kinase receptor, found in Canis lupus familiaris (Dog).